The primary structure comprises 369 residues: Nuclear pore complex-interacting protein family member A7 (369 aa).

Residues 151–171 (SMKEREHREEERQVSEAEENG) are disordered.

The protein belongs to the NPIP family.

This Homo sapiens (Human) protein is Nuclear pore complex-interacting protein family member A7 (NPIPA7).